Here is a 609-residue protein sequence, read N- to C-terminus: Cationic amino acid transporter 3, mitochondrial (609 aa).

The transit peptide at 1–14 (MGCLRSLVRRKQFD) directs the protein to the mitochondrion. Helical transmembrane passes span 38 to 58 (LIAIGVGSTIGAGVYILVGTV), 66 to 86 (ALALSFLIAGISAALSAFCYA), 104 to 124 (ICIGEGVAWLIGWALILEYTI), 161 to 181 (IVVDPCAAVLVFIVTGLCCLG), 190 to 210 (GIVTTANVFVMIFVIVAGSYL), 226 to 246 (FPYGVDGMLTGSATVFFAYIG), 270 to 290 (ISLLLCCLLYMMVSVVIVGLV), 314 to 334 (AYLINLGAVMALCSALMGSIL), 361 to 381 (QVPINGTITTGVCAAILAFFM), 388 to 408 (GMVSVGTLVAFTMVAISLLIV), 474 to 494 (IMFTCIGNFLLSYAASSFLLP), 499 to 519 (YSLCGVGGLFLLVGLIVLICI), 534 to 554 (FICPFVPLLPIVCILINMYLL), and 558 to 578 (GAATWVRVSVWLFLGVVVYIF).

This sequence belongs to the amino acid-polyamine-organocation (APC) superfamily. Cationic amino acid transporter (CAT) (TC 2.A.3.3) family. Expressed in roots, stems, flowers, and leaves.

It localises to the mitochondrion membrane. In terms of biological role, permease involved in the transport of the cationic neutral or acidic amino acids. The polypeptide is Cationic amino acid transporter 3, mitochondrial (CAT3) (Arabidopsis thaliana (Mouse-ear cress)).